The chain runs to 280 residues: Trypsin zeta (280 aa).

The signal sequence occupies residues 1-22 (MSSSWIVGLLAFLVSLVALTQG). The propeptide at 23 to 38 (LPLLEDLDEKSVPDGR) is activation peptide. The 240-residue stretch at 39–278 (IVGGYATDIA…LRPWIDAVLA (240 aa)) folds into the Peptidase S1 domain. Residues C72 and C88 are joined by a disulfide bond. Residues H87 and D134 each act as charge relay system in the active site. 2 cysteine pairs are disulfide-bonded: C198–C218 and C230–C254. S234 functions as the Charge relay system in the catalytic mechanism.

The protein belongs to the peptidase S1 family.

The protein resides in the secreted. Its subcellular location is the extracellular space. The catalysed reaction is Preferential cleavage: Arg-|-Xaa, Lys-|-Xaa.. This is Trypsin zeta (zetaTry) from Drosophila melanogaster (Fruit fly).